Here is a 356-residue protein sequence, read N- to C-terminus: Aromatic dipeptide epimerase (356 aa).

Residues Thr136 and 161 to 163 contribute to the substrate site; that span reads KVK. Residues Asp191, Glu219, and Asp244 each coordinate Mg(2+). Residues Lys268 and 320 to 322 each bind substrate; that span reads DLD.

Belongs to the mandelate racemase/muconate lactonizing enzyme family. Requires Mg(2+) as cofactor.

Has epimerase activity with a variety of hydrophobic dipeptides (in vitro). Enzyme activity is highest with L-Phe-L-Tyr, but is still relatively low, suggesting that L-Phe-L-Tyr is not the physiological substrate. This chain is Aromatic dipeptide epimerase, found in Herpetosiphon aurantiacus (strain ATCC 23779 / DSM 785 / 114-95).